The chain runs to 263 residues: Malonyl-[acyl-carrier protein] O-methyltransferase (263 aa).

It belongs to the methyltransferase superfamily.

The enzyme catalyses malonyl-[ACP] + S-adenosyl-L-methionine = malonyl-[ACP] methyl ester + S-adenosyl-L-homocysteine. Its pathway is cofactor biosynthesis; biotin biosynthesis. In terms of biological role, converts the free carboxyl group of a malonyl-thioester to its methyl ester by transfer of a methyl group from S-adenosyl-L-methionine (SAM). It allows to synthesize pimeloyl-ACP via the fatty acid synthetic pathway. The polypeptide is Malonyl-[acyl-carrier protein] O-methyltransferase (Chlorobium luteolum (strain DSM 273 / BCRC 81028 / 2530) (Pelodictyon luteolum)).